The chain runs to 59 residues: VPTQRLCGSHLVDALYFVCGERGFFYSPKPIRELEPLLGIVEQCCHNTCSLANLEGYCN.

3 disulfide bridges follow: Cys7–Cys45, Cys19–Cys58, and Cys44–Cys49.

The protein belongs to the insulin family. Heterodimer of a B chain and an A chain linked by two disulfide bonds.

Its subcellular location is the secreted. Functionally, insulin decreases blood glucose concentration. It increases cell permeability to monosaccharides, amino acids and fatty acids. It accelerates glycolysis, the pentose phosphate cycle, and glycogen synthesis in liver. The chain is Insulin (ins) from Chimaera monstrosa (Rabbit fish).